Here is a 173-residue protein sequence, read N- to C-terminus: Bifunctional protein PyrR (173 aa).

Residues 93-105 carry the PRPP-binding motif; it reads VILIDDVLYTGRT.

It belongs to the purine/pyrimidine phosphoribosyltransferase family. PyrR subfamily. In terms of assembly, homodimer and homohexamer; in equilibrium.

It catalyses the reaction UMP + diphosphate = 5-phospho-alpha-D-ribose 1-diphosphate + uracil. In terms of biological role, regulates transcriptional attenuation of the pyrimidine nucleotide (pyr) operon by binding in a uridine-dependent manner to specific sites on pyr mRNA. This disrupts an antiterminator hairpin in the RNA and favors formation of a downstream transcription terminator, leading to a reduced expression of downstream genes. Functionally, also displays a weak uracil phosphoribosyltransferase activity which is not physiologically significant. The sequence is that of Bifunctional protein PyrR from Streptococcus pyogenes serotype M49 (strain NZ131).